The following is a 379-amino-acid chain: Homoserine O-succinyltransferase (379 aa).

Residues asparagine 51–leucine 360 form the AB hydrolase-1 domain. Catalysis depends on serine 157, which acts as the Nucleophile. Arginine 227 serves as a coordination point for substrate. Active-site residues include aspartate 323 and histidine 356. Residue aspartate 357 participates in substrate binding.

The protein belongs to the AB hydrolase superfamily. MetX family. Homodimer.

Its subcellular location is the cytoplasm. It carries out the reaction L-homoserine + succinyl-CoA = O-succinyl-L-homoserine + CoA. The protein operates within amino-acid biosynthesis; L-methionine biosynthesis via de novo pathway; O-succinyl-L-homoserine from L-homoserine: step 1/1. In terms of biological role, transfers a succinyl group from succinyl-CoA to L-homoserine, forming succinyl-L-homoserine. This is Homoserine O-succinyltransferase from Pseudomonas putida (strain GB-1).